Consider the following 399-residue polypeptide: S-adenosylmethionine synthase (399 aa).

Position 15 (His-15) interacts with ATP. Asp-17 contacts Mg(2+). Glu-43 is a binding site for K(+). Glu-56 and Gln-99 together coordinate L-methionine. The tract at residues 99–109 (QSPDIARGVNR) is flexible loop. ATP-binding positions include 166–168 (DAK), 232–233 (RF), Asp-241, 247–248 (RK), Ala-264, and Lys-268. Asp-241 is an L-methionine binding site. Lys-272 provides a ligand contact to L-methionine.

This sequence belongs to the AdoMet synthase family. Homotetramer; dimer of dimers. The cofactor is Mg(2+). It depends on K(+) as a cofactor.

The protein resides in the cytoplasm. It carries out the reaction L-methionine + ATP + H2O = S-adenosyl-L-methionine + phosphate + diphosphate. It participates in amino-acid biosynthesis; S-adenosyl-L-methionine biosynthesis; S-adenosyl-L-methionine from L-methionine: step 1/1. Catalyzes the formation of S-adenosylmethionine (AdoMet) from methionine and ATP. The overall synthetic reaction is composed of two sequential steps, AdoMet formation and the subsequent tripolyphosphate hydrolysis which occurs prior to release of AdoMet from the enzyme. In Nitrosospira multiformis (strain ATCC 25196 / NCIMB 11849 / C 71), this protein is S-adenosylmethionine synthase.